The sequence spans 24 residues: Cryptonin (24 aa).

Antimicrobial peptide, active against the Gram-negative bacterium E.coli K12-594 (MIC=3.12 ug/ml), the Gram-positive bacteria B.subtilis KCTC 3086 (MIC=3.12 ug/ml), S.aureus KCTC 1928 (MIC=25 ug/ml) and M.luteus KCTC 3063 (MIC=1.56 ug/ml), the antibiotic resistant bacteria methicillin-resistant S.aureus (MRSA) (MIC=25 ug/ml) and vancomycin-resistant Enterococci (VRE) (MIC=25 ug/ml), and the fungi C.albicans KCTC 7965 (MIC=50 ug/ml) and C.tropicalis KCTC 1925 (MIC=3.12 ug/ml). Has very low hemolytic activity on rat erythrocytes. This is Cryptonin from Cryptotympana dubia (Korean horse cicada).